A 219-amino-acid polypeptide reads, in one-letter code: Vacuolar iron transporter homolog 2.1 (219 aa).

Residues 1-15 (MTSNVQLSETNSPRN) show a composition bias toward polar residues. The interval 1 to 26 (MTSNVQLSETNSPRNQKTRPRAEKEE) is disordered. Residue threonine 2 is modified to N-acetylthreonine. At 2 to 37 (TSNVQLSETNSPRNQKTRPRAEKEEVDYMQRAQWLR) the chain is on the cytoplasmic side. The helical transmembrane segment at 38–58 (AALLGANDGLVTVASLMMGVG) threads the bilayer. Residues 59 to 67 (SIKEDVKAM) are Vacuolar-facing. A helical membrane pass occupies residues 68-88 (LLVGFAGLVAGACSMAIGEFV). Topologically, residues 89 to 133 (SVCTQRDIETAQMKRAIEHKTSLSAIDEQEEEEKKERLPNPGQAA) are cytoplasmic. The chain crosses the membrane as a helical span at residues 134–154 (IASALAFSVGAAMPLLGAVFI). Over 155–161 (ENHKVRM) the chain is Vacuolar. The chain crosses the membrane as a helical span at residues 162–182 (VVVAVVATIALVVFGVTGAVL). Residues 183 to 193 (GKTSVVKSSVR) are Cytoplasmic-facing. The chain crosses the membrane as a helical span at residues 194-214 (VVIGGWMAMALTFGLTKFIGS). Topologically, residues 215 to 219 (AAMQI) are vacuolar.

Belongs to the CCC1 family. As to expression, highly expressed in roots. inflorescences and at lower levels in leaves.

The protein localises to the vacuole membrane. The catalysed reaction is Fe(2+)(in) = Fe(2+)(out). Functionally, vacuolar iron transporter involved in the transfer of iron ions from the cytosol to the vacuole for intracellular iron storage. Involved in regulation of cellular iron homeostasis. Vacuolar iron storage is required for seed embryo and seedling development. In Arabidopsis thaliana (Mouse-ear cress), this protein is Vacuolar iron transporter homolog 2.1.